A 248-amino-acid polypeptide reads, in one-letter code: Coproheme decarboxylase (248 aa).

Fe-coproporphyrin III is bound by residues Arg130, 144 to 148 (YPMDK), His171, Gln184, and Ser222. Residue Tyr144 is part of the active site.

It belongs to the ChdC family. Type 1 subfamily. Homopentamer. Requires Fe-coproporphyrin III as cofactor.

It carries out the reaction Fe-coproporphyrin III + 2 H2O2 + 2 H(+) = heme b + 2 CO2 + 4 H2O. The enzyme catalyses Fe-coproporphyrin III + H2O2 + H(+) = harderoheme III + CO2 + 2 H2O. The catalysed reaction is harderoheme III + H2O2 + H(+) = heme b + CO2 + 2 H2O. It functions in the pathway porphyrin-containing compound metabolism; protoheme biosynthesis. Functionally, involved in coproporphyrin-dependent heme b biosynthesis. Catalyzes the decarboxylation of Fe-coproporphyrin III (coproheme) to heme b (protoheme IX), the last step of the pathway. The reaction occurs in a stepwise manner with a three-propionate intermediate. The polypeptide is Coproheme decarboxylase (Geobacillus kaustophilus (strain HTA426)).